We begin with the raw amino-acid sequence, 307 residues long: D-alanine--D-alanine ligase (307 aa).

Residues 105 to 304 (KMLWKGFGLP…FEKLVEKILE (200 aa)) form the ATP-grasp domain. 135 to 190 (VARLGLPLMVKPSREGSSVGLTKVDSADKLKSAVDLALKFDDIVLIEEWLSGDELT) contacts ATP. Mg(2+) contacts are provided by D258, E271, and N273.

This sequence belongs to the D-alanine--D-alanine ligase family. Mg(2+) serves as cofactor. Requires Mn(2+) as cofactor.

It is found in the cytoplasm. It catalyses the reaction 2 D-alanine + ATP = D-alanyl-D-alanine + ADP + phosphate + H(+). It functions in the pathway cell wall biogenesis; peptidoglycan biosynthesis. In terms of biological role, cell wall formation. The polypeptide is D-alanine--D-alanine ligase (Actinobacillus succinogenes (strain ATCC 55618 / DSM 22257 / CCUG 43843 / 130Z)).